Here is a 185-residue protein sequence, read N- to C-terminus: Elongation factor P (185 aa).

It belongs to the elongation factor P family.

Its subcellular location is the cytoplasm. Its pathway is protein biosynthesis; polypeptide chain elongation. Involved in peptide bond synthesis. Stimulates efficient translation and peptide-bond synthesis on native or reconstituted 70S ribosomes in vitro. Probably functions indirectly by altering the affinity of the ribosome for aminoacyl-tRNA, thus increasing their reactivity as acceptors for peptidyl transferase. The polypeptide is Elongation factor P (Herpetosiphon aurantiacus (strain ATCC 23779 / DSM 785 / 114-95)).